The sequence spans 312 residues: tRNA uridine(34) hydroxylase (312 aa).

A Rhodanese domain is found at 147–237 (SDRNVIFIDM…GILGYVHDAN (91 aa)). The active-site Cysteine persulfide intermediate is the C201.

Belongs to the TrhO family.

The enzyme catalyses uridine(34) in tRNA + AH2 + O2 = 5-hydroxyuridine(34) in tRNA + A + H2O. Functionally, catalyzes oxygen-dependent 5-hydroxyuridine (ho5U) modification at position 34 in tRNAs. In Buchnera aphidicola subsp. Schizaphis graminum (strain Sg), this protein is tRNA uridine(34) hydroxylase.